The sequence spans 358 residues: L-lysine 3-hydroxylase (358 aa).

Fe cation-binding residues include histidine 178, glutamate 180, and histidine 314. Arginine 328 lines the 2-oxoglutarate pocket.

This sequence belongs to the clavaminate synthase family. Requires Fe(2+) as cofactor.

The catalysed reaction is L-lysine + 2-oxoglutarate + O2 = (3S)-3-hydroxy-L-lysine + succinate + CO2. Its function is as follows. Alpha-ketoglutarate-dependent dioxygenase that in vitro catalyzes the regio- and stereoselective hydroxylation of L-lysine, leading to (3S)-3-hydroxy-L-lysine. Can also use (5R)-5-hydroxy-L-lysine as substrate, but neither D-lysine nor L-ornithine. This Catenulispora acidiphila (strain DSM 44928 / JCM 14897 / NBRC 102108 / NRRL B-24433 / ID139908) protein is L-lysine 3-hydroxylase.